The following is a 290-amino-acid chain: Arylamine N-acetyltransferase 2 (290 aa).

Cysteine 68 functions as the Acyl-thioester intermediate in the catalytic mechanism. CoA is bound by residues serine 103 and glycine 104. 106–107 contacts substrate; it reads IH. Active-site residues include histidine 107 and aspartate 122. Tyrosine 208 contacts CoA.

Belongs to the arylamine N-acetyltransferase family.

The protein resides in the cytoplasm. The catalysed reaction is an arylamine + acetyl-CoA = an N-acetylarylamine + CoA. It carries out the reaction an N-hydroxyarylamine + acetyl-CoA = an N-acetoxyarylamine + CoA. In terms of biological role, catalyzes the N- or O-acetylation of various arylamine and heterocyclic amine substrates. Participates in the detoxification of a plethora of hydrazine and arylamine drugs. This is Arylamine N-acetyltransferase 2 (Nat2) from Rattus norvegicus (Rat).